The following is a 249-amino-acid chain: 5'-nucleotidase SurE (249 aa).

Positions 9, 10, 40, and 92 each coordinate a divalent metal cation.

Belongs to the SurE nucleotidase family. It depends on a divalent metal cation as a cofactor.

The protein resides in the cytoplasm. The catalysed reaction is a ribonucleoside 5'-phosphate + H2O = a ribonucleoside + phosphate. In terms of biological role, nucleotidase that shows phosphatase activity on nucleoside 5'-monophosphates. This is 5'-nucleotidase SurE from Shewanella baltica (strain OS223).